The chain runs to 163 residues: Phospholipase A2 homolog 3 (163 aa).

The first 43 residues, 1 to 43 (MARGGSFSRLRLRAGVVVAAAAAALLLFAVVAPPAAALNIGLQ), serve as a signal peptide directing secretion. Cystine bridges form between cysteine 55–cysteine 83, cysteine 59–cysteine 89, cysteine 64–cysteine 137, cysteine 76–cysteine 96, cysteine 95–cysteine 121, and cysteine 102–cysteine 114. 3 residues coordinate Ca(2+): tyrosine 75, glycine 77, and tyrosine 80. Residue histidine 99 is part of the active site. Aspartate 100 lines the Ca(2+) pocket.

The protein belongs to the phospholipase A2 family. It depends on Ca(2+) as a cofactor.

The protein resides in the secreted. The catalysed reaction is a 1,2-diacyl-sn-glycero-3-phosphocholine + H2O = a 1-acyl-sn-glycero-3-phosphocholine + a fatty acid + H(+). With respect to regulation, inhibited by EGTA. Its function is as follows. PA2 catalyzes the calcium-dependent hydrolysis of the 2-acyl groups in 3-sn-phosphoglycerides. Releases lysophospholipids (LPLs) and free fatty acids (FFAs) from membrane phospholipids in response to hormones and other external stimuli. The sequence is that of Phospholipase A2 homolog 3 (PLA2-III) from Oryza sativa subsp. japonica (Rice).